A 705-amino-acid chain; its full sequence is Voltage-dependent calcium channel beta subunit-associated regulatory protein (705 aa).

The Extracellular portion of the chain corresponds to 1–45; sequence MQPTATMATAATTTTTTTATVALTTSWDNATGRPTAEPDPILDNY. Asparagine 29 is a glycosylation site (N-linked (GlcNAc...) asparagine). Residues 46–66 traverse the membrane as a helical; Signal-anchor for type III membrane protein segment; that stretch reads VLLVVVMSLFVGGTLVVLSGV. The Cytoplasmic portion of the chain corresponds to 67–705; that stretch reads LLLCKRCWDV…APTSPDHSPA (639 aa). Disordered regions lie at residues 91-113 and 212-284; these read TTTY…EDPE and GKAL…GSGA. The span at 245–254 shows a compositional bias: polar residues; it reads PSASSDSGEG. Residues 267–284 are compositionally biased toward gly residues; sequence GGPGAAAGPGEAGPGSGA. A phosphoserine mark is found at serine 299 and serine 304. 4 disordered regions span residues 316–353, 369–436, 448–540, and 559–655; these read PSQR…DAPQ, FPHP…SYRD, AAAS…RRDY, and HFDD…CPGS. Positions 344–353 are enriched in acidic residues; that stretch reads TEQEEGDAPQ. The span at 371–382 shows a compositional bias: pro residues; it reads HPRPFLASPPPA. The segment covering 383–397 has biased composition (low complexity); sequence LGRLEAAEAAGGASP. A compositionally biased stretch (pro residues) spans 479–488; that stretch reads AFPPPSPPAP. A compositionally biased stretch (basic and acidic residues) spans 489-499; that stretch reads RPKDGEARRLL. 2 positions are modified to phosphoserine: serine 507 and serine 528. The span at 567–585 shows a compositional bias: basic residues; it reads ARHRARAHPHARKQWQRGR. Low complexity predominate over residues 591–614; it reads GARAAPALAGTPAPPAGAARPARA. Serine 621 is subject to Phosphoserine. At threonine 698 the chain carries Phosphothreonine. Residues serine 699 and serine 703 each carry the phosphoserine modification.

As to quaternary structure, interacts with voltage-dependent calcium channels CACNB1, CACNB2, CACNB3 and CACNB4 beta subunits; prevents their interaction with the CACNA1C alpha subunit thereby negatively regulating the activity of the corresponding calcium channels.

It is found in the cytoplasmic vesicle. It localises to the secretory vesicle. The protein localises to the synaptic vesicle membrane. The protein resides in the cell membrane. Its subcellular location is the cell projection. It is found in the growth cone. In terms of biological role, negatively regulates voltage-gated calcium channels by preventing the interaction between their alpha and beta subunits. Thereby, negatively regulates calcium channels activity at the plasma membrane and indirectly inhibits calcium-regulated exocytosis. In Homo sapiens (Human), this protein is Voltage-dependent calcium channel beta subunit-associated regulatory protein.